A 419-amino-acid polypeptide reads, in one-letter code: Ribosome biogenesis protein WDR12 homolog (419 aa).

A ubiquitin-like (UBL) domain region spans residues 10-91 (VQVHLKTKQE…EDAIEIEYVE (82 aa)). 7 WD repeats span residues 103–141 (LHDDWVSAVKASGKWILTGCYDNTLNIWTNKGKHILTIP), 142–184 (GHTA…NTVE), 191–230 (GHERGVDSVSVSPDGQRFATGSWDTMLKVWSAELEDAGEG), 249–287 (GHRESISAVQWMDASTLLTGSWDHTLKVWDLSLEGIKAE), 289–328 (STNKSIFDASYSKLNHLILTASADKNLRLYDSRTNQGSVV), 334–374 (GHNA…APLY), and 378–416 (GHGEKVLDIDWSNPKYIVSGGSDNTVRVFKSRKALVENM).

It belongs to the WD repeat WDR12/YTM1 family.

It localises to the nucleus. Its subcellular location is the nucleolus. The protein localises to the nucleoplasm. Its function is as follows. Required for maturation of ribosomal RNAs and formation of the large ribosomal subunit. The sequence is that of Ribosome biogenesis protein WDR12 homolog from Drosophila pseudoobscura pseudoobscura (Fruit fly).